Reading from the N-terminus, the 338-residue chain is Large ribosomal subunit protein uL3 (338 aa).

Positions His230–Gly258 are disordered.

Belongs to the universal ribosomal protein uL3 family. As to quaternary structure, part of the 50S ribosomal subunit. Forms a cluster with proteins L14 and L24e.

In terms of biological role, one of the primary rRNA binding proteins, it binds directly near the 3'-end of the 23S rRNA, where it nucleates assembly of the 50S subunit. The chain is Large ribosomal subunit protein uL3 from Pyrobaculum aerophilum (strain ATCC 51768 / DSM 7523 / JCM 9630 / CIP 104966 / NBRC 100827 / IM2).